Here is a 202-residue protein sequence, read N- to C-terminus: Sterile alpha motif domain-containing protein 10 (202 aa).

The disordered stretch occupies residues 1–22 (MFTELRSKLSPPRARAGAVRPG). The region spanning 118–184 (WSQQDVCKWL…LQQVLHLQVR (67 aa)) is the SAM domain.

In Mus musculus (Mouse), this protein is Sterile alpha motif domain-containing protein 10.